We begin with the raw amino-acid sequence, 257 residues long: 6-phosphogluconolactonase (257 aa).

At A2 the chain carries N-acetylalanine. Residue S49 is modified to Phosphoserine. At K180 the chain carries N6-acetyllysine.

This sequence belongs to the glucosamine/galactosamine-6-phosphate isomerase family. 6-phosphogluconolactonase subfamily.

It localises to the cytoplasm. It catalyses the reaction 6-phospho-D-glucono-1,5-lactone + H2O = 6-phospho-D-gluconate + H(+). It participates in carbohydrate degradation; pentose phosphate pathway; D-ribulose 5-phosphate from D-glucose 6-phosphate (oxidative stage): step 2/3. In terms of biological role, hydrolysis of 6-phosphogluconolactone to 6-phosphogluconate. In Rattus norvegicus (Rat), this protein is 6-phosphogluconolactonase.